Here is a 158-residue protein sequence, read N- to C-terminus: Hypoxanthine DNA glycosylase (158 aa).

The active site involves N39.

Belongs to the uracil-DNA glycosylase (UDG) superfamily. Type 6 (HDG) family.

Its function is as follows. Excises hypoxanthine, a deamination product of adenine, from double-stranded DNA. Acts on double-stranded DNA containing G/I, T/I, A/I and C/I base pairs, but not on single-stranded inosine-containing DNA. Also has minor xanthine DNA glycosylase activity. Lacks any detectable uracil-DNA glycosylase activity. This is Hypoxanthine DNA glycosylase from Methanosarcina acetivorans (strain ATCC 35395 / DSM 2834 / JCM 12185 / C2A).